The primary structure comprises 510 residues: Ribonuclease Y (510 aa).

The helical transmembrane segment at 4–24 (LLWAVVALLAGLAGGAGIGVY) threads the bilayer. In terms of domain architecture, KH spans 200–260 (TVSTVNLPSE…VRREVARVAL (61 aa)). Positions 326-419 (VLQHSLECAL…VIAADAISGA (94 aa)) constitute an HD domain.

This sequence belongs to the RNase Y family.

It is found in the cell membrane. In terms of biological role, endoribonuclease that initiates mRNA decay. This is Ribonuclease Y from Chloroflexus aurantiacus (strain ATCC 29366 / DSM 635 / J-10-fl).